Reading from the N-terminus, the 440-residue chain is Trigger factor (440 aa).

The PPIase FKBP-type domain maps to 161–257 (GDYVKLAYEG…VLEVRERVLP (97 aa)).

The protein belongs to the FKBP-type PPIase family. Tig subfamily.

It is found in the cytoplasm. It carries out the reaction [protein]-peptidylproline (omega=180) = [protein]-peptidylproline (omega=0). Its function is as follows. Involved in protein export. Acts as a chaperone by maintaining the newly synthesized protein in an open conformation. Functions as a peptidyl-prolyl cis-trans isomerase. This is Trigger factor from Opitutus terrae (strain DSM 11246 / JCM 15787 / PB90-1).